The chain runs to 485 residues: Glutamyl-tRNA(Gln) amidotransferase subunit A (485 aa).

Residues K75 and S150 each act as charge relay system in the active site. S174 serves as the catalytic Acyl-ester intermediate.

It belongs to the amidase family. GatA subfamily. In terms of assembly, heterotrimer of A, B and C subunits.

It catalyses the reaction L-glutamyl-tRNA(Gln) + L-glutamine + ATP + H2O = L-glutaminyl-tRNA(Gln) + L-glutamate + ADP + phosphate + H(+). Allows the formation of correctly charged Gln-tRNA(Gln) through the transamidation of misacylated Glu-tRNA(Gln) in organisms which lack glutaminyl-tRNA synthetase. The reaction takes place in the presence of glutamine and ATP through an activated gamma-phospho-Glu-tRNA(Gln). The chain is Glutamyl-tRNA(Gln) amidotransferase subunit A from Picosynechococcus sp. (strain ATCC 27264 / PCC 7002 / PR-6) (Agmenellum quadruplicatum).